The chain runs to 336 residues: Phosphate acyltransferase (336 aa).

Belongs to the PlsX family. As to quaternary structure, homodimer. Probably interacts with PlsY.

The protein resides in the cytoplasm. The enzyme catalyses a fatty acyl-[ACP] + phosphate = an acyl phosphate + holo-[ACP]. It participates in lipid metabolism; phospholipid metabolism. Catalyzes the reversible formation of acyl-phosphate (acyl-PO(4)) from acyl-[acyl-carrier-protein] (acyl-ACP). This enzyme utilizes acyl-ACP as fatty acyl donor, but not acyl-CoA. This chain is Phosphate acyltransferase, found in Pseudomonas putida (strain ATCC 700007 / DSM 6899 / JCM 31910 / BCRC 17059 / LMG 24140 / F1).